Here is a 364-residue protein sequence, read N- to C-terminus: Uroporphyrinogen decarboxylase (364 aa).

Substrate contacts are provided by residues 49–53 (RQAGR), Asp-98, Tyr-173, Ser-228, and His-341.

It belongs to the uroporphyrinogen decarboxylase family. Homodimer.

It is found in the cytoplasm. It catalyses the reaction uroporphyrinogen III + 4 H(+) = coproporphyrinogen III + 4 CO2. The protein operates within porphyrin-containing compound metabolism; protoporphyrin-IX biosynthesis; coproporphyrinogen-III from 5-aminolevulinate: step 4/4. In terms of biological role, catalyzes the decarboxylation of four acetate groups of uroporphyrinogen-III to yield coproporphyrinogen-III. This is Uroporphyrinogen decarboxylase from Protochlamydia amoebophila (strain UWE25).